The chain runs to 203 residues: LexA repressor (203 aa).

The H-T-H motif DNA-binding region spans 30 to 50 (VREICQAVSLKSTSTVHGHLK). Residues serine 127 and lysine 164 each act as for autocatalytic cleavage activity in the active site.

It belongs to the peptidase S24 family. As to quaternary structure, homodimer.

The enzyme catalyses Hydrolysis of Ala-|-Gly bond in repressor LexA.. Represses a number of genes involved in the response to DNA damage (SOS response), including recA and lexA. In the presence of single-stranded DNA, RecA interacts with LexA causing an autocatalytic cleavage which disrupts the DNA-binding part of LexA, leading to derepression of the SOS regulon and eventually DNA repair. This Clostridium perfringens (strain ATCC 13124 / DSM 756 / JCM 1290 / NCIMB 6125 / NCTC 8237 / Type A) protein is LexA repressor.